The following is a 356-amino-acid chain: S-adenosylmethionine:tRNA ribosyltransferase-isomerase (356 aa).

This sequence belongs to the QueA family. In terms of assembly, monomer.

The protein localises to the cytoplasm. It catalyses the reaction 7-aminomethyl-7-carbaguanosine(34) in tRNA + S-adenosyl-L-methionine = epoxyqueuosine(34) in tRNA + adenine + L-methionine + 2 H(+). Its pathway is tRNA modification; tRNA-queuosine biosynthesis. Its function is as follows. Transfers and isomerizes the ribose moiety from AdoMet to the 7-aminomethyl group of 7-deazaguanine (preQ1-tRNA) to give epoxyqueuosine (oQ-tRNA). The polypeptide is S-adenosylmethionine:tRNA ribosyltransferase-isomerase (Nitrosospira multiformis (strain ATCC 25196 / NCIMB 11849 / C 71)).